Consider the following 335-residue polypeptide: Putative serine/threonine-protein kinase 040L (335 aa).

A Protein kinase domain is found at 33 to 329; the sequence is YYYQEFHDEG…DRLTELHHHL (297 aa). Residues 39 to 47 and Lys-62 each bind ATP; that span reads HDEGGYGSI. The Proton acceptor role is filled by Asp-196.

Belongs to the protein kinase superfamily. Ser/Thr protein kinase family.

In Invertebrate iridescent virus 3 (IIV-3), this protein is Putative serine/threonine-protein kinase 040L.